Reading from the N-terminus, the 233-residue chain is B-cell lymphoma/leukemia 10 (233 aa).

At methionine 1 the chain carries N-acetylmethionine. A CARD domain is found at 13 to 101 (LTEVKKDALE…QSFLIQKITD (89 aa)). Glycyl lysine isopeptide (Lys-Gly) (interchain with G-Cter in ubiquitin) cross-links involve residues lysine 17, lysine 31, and lysine 63. A Phosphoserine modification is found at serine 138. Residues 185–233 (SSFSSATLPRPGDPGAPPLPPDLRLEEGGSCGNSSEMFLPLRSRALSRQ) form a disordered region. Residues 195 to 205 (PGDPGAPPLPP) are compositionally biased toward pro residues.

Homomultimer; homooligomerized following recruitment by CARD domain-containing proteins that form a nucleating helical template that recruits BCL10 via CARD-CARD interaction. Self-associates by CARD-CARD interaction and interacts with other CARD-proteins such as CARD9, CARD10, CARD11 and CARD14. Forms a complex with CARD14 and MALT1; resulting in the formation of a CBM (CARD14-BCL10-MALT1) complex. Forms a complex with CARD11 and MALT1; resulting in the formation of a CBM (CARD11-BCL10-MALT1) complex. Forms a complex with CARD9 and MALT1; resulting in the formation of a CBM (CARD9-BCL10-MALT1) complex. Found in a membrane raft complex, at least composed of BCL10, CARD11, DPP4 and IKBKB. Binds caspase-9 with its C-terminal domain. Interacts with TRAF2 and BIRC2/c-IAP2. Interacts with PELI2 and SOCS3; these interactions may be mutually exclusive. Post-translationally, phosphorylated by IKBKB/IKKB. In terms of processing, ubiquitinated via both 'Lys-63'-linked and linear ('Met-1'-linked) polyubiquitin chains in response to T-cell receptor (TCR) activation. Ubiquitination is recognized by IKBKG/NEMO, the regulatory subunit of I-kappa-B kinase (IKK), and is required for TCR-induced NF-kappa-B activation. Linear ubiquitination at Lys-17, Lys-31 and Lys-63 is mediated by RNF31/HOIP; linear ubiquitination is recognized with much higher affinity than 'Lys-63'-linked ubiquitin by IKBKG/NEMO. CARD11 is required for linear ubiquitination by HOIP by promoting the targeting of BCL10 to RNF31/HOIP. Proteolytically cleaved by MALT1; required for T-cell activation. In terms of tissue distribution, highly expressed in heart, brain, spleen, lung, liver, skeletal muscle, kidney and testis. Detected in developing brain, olfactory epithelium, tongue, whisker follicles, salivary gland, heart, lung, liver and intestinal epithelia of stage 15 embryos.

It localises to the cytoplasm. It is found in the membrane raft. Plays a key role in both adaptive and innate immune signaling by bridging CARD domain-containing proteins to immune activation. Acts by channeling adaptive and innate immune signaling downstream of CARD domain-containing proteins CARD9, CARD11 and CARD14 to activate NF-kappa-B and MAP kinase p38 (MAPK11, MAPK12, MAPK13 and/or MAPK14) pathways which stimulate expression of genes encoding pro-inflammatory cytokines and chemokines. Recruited by activated CARD domain-containing proteins: homooligomerized CARD domain-containing proteins form a nucleating helical template that recruits BCL10 via CARD-CARD interaction, thereby promoting polymerization of BCL10, subsequent recruitment of MALT1 and formation of a CBM complex. This leads to activation of NF-kappa-B and MAP kinase p38 (MAPK11, MAPK12, MAPK13 and/or MAPK14) pathways which stimulate expression of genes encoding pro-inflammatory cytokines and chemokines. Activated by CARD9 downstream of C-type lectin receptors; CARD9-mediated signals are essential for antifungal immunity. Activated by CARD11 downstream of T-cell receptor (TCR) and B-cell receptor (BCR). Promotes apoptosis, pro-caspase-9 maturation and activation of NF-kappa-B via NIK and IKK. The sequence is that of B-cell lymphoma/leukemia 10 (Bcl10) from Mus musculus (Mouse).